A 641-amino-acid chain; its full sequence is MGRRSTSSTKSGKFMNPTDQARKEARKRELKKNKKQRMMVRAAVLKMKDPKQIIRDMEKLDEMEFNPVQQPQLNEKVLKDKRKKLRETFERILRLYEKENPDIYKELRKLEVEYEQKRAQLSQYFDAVKNAQHVEVESIPLPDMPHAPSNILIQDIPLPGAQPPSILKKTSAYGPPARAVSILPLLGHGVPRLPPGRKPPGPPPGPPPPQVLQMYGRKVGFALDLPPRRRDEDMLYSPELAQRGHDDDMSSTSEDDGYPEDMDQDKHDDSTEDSDTDRSDAESDGDEFGHREDSERDNTEEKKSGLSVRFADMPGKSRKKKKNMKELTPLQAMMLRMAGQEIPEEGREVEEFSEEEDADDSDDSEAEKQSQKQHKDDGHSDSTAAASSQQQAPPQSAPASQIQAPPMPGPPPLGPPPAPPLRPPGPPTGLPPGPPPGAPPFLRPPGMPGIRGPLPRLLPPGPPPGRPPGPPPGPPPGLPPGPPPRGPPPRLPPPAPPGIPPPRPGMMRPPLVPPLGPAPPGLFPPAPLPNPGVLSAPPSLIQRPKADDASAATIEKKATATISAKPQITNPKAEVTRFVPTALRVRRENKGATAVPQRRSEDDSAVPVAKAAPRSGPSVAVSVQTKDDVYEAFMKEMEGLL.

A compositionally biased stretch (polar residues) spans 1–11; the sequence is MGRRSTSSTKS. Positions 1-37 are disordered; that stretch reads MGRRSTSSTKSGKFMNPTDQARKEARKRELKKNKKQR. A required for nuclear import region spans residues 1-45; that stretch reads MGRRSTSSTKSGKFMNPTDQARKEARKRELKKNKKQRMMVRAAVL. Position 13 is an N6-acetyllysine (lysine 13). A compositionally biased stretch (basic residues) spans 28 to 37; that stretch reads RELKKNKKQR. A coiled-coil region spans residues 75-133; sequence EKVLKDKRKKLRETFERILRLYEKENPDIYKELRKLEVEYEQKRAQLSQYFDAVKNAQH. Position 181 is a phosphoserine (serine 181). The tract at residues 188 to 213 is disordered; it reads HGVPRLPPGRKPPGPPPGPPPPQVLQ. The residue at position 192 (arginine 192) is an Omega-N-methylarginine. Pro residues predominate over residues 192 to 210; that stretch reads RLPPGRKPPGPPPGPPPPQ. Positions 217–221 are interaction with PP1; sequence RKVGF. Tyrosine 236 is subject to Phosphotyrosine. The tract at residues 236 to 550 is disordered; that stretch reads YSPELAQRGH…IQRPKADDAS (315 aa). Serine 237 bears the Phosphoserine mark. Residues 253-263 show a composition bias toward acidic residues; it reads SEDDGYPEDMD. The segment covering 276 to 304 has biased composition (basic and acidic residues); that stretch reads TDRSDAESDGDEFGHREDSERDNTEEKKS. 2 positions are modified to phosphoserine: serine 279 and serine 283. The interaction with PP1 stretch occupies residues 306-310; sequence LSVRF. The segment covering 351 to 365 has biased composition (acidic residues); sequence EFSEEEDADDSDDSE. Phosphoserine occurs at positions 353, 361, and 364. Positions 366–380 are enriched in basic and acidic residues; it reads AEKQSQKQHKDDGHS. The segment covering 381 to 404 has biased composition (low complexity); that stretch reads DSTAAASSQQQAPPQSAPASQIQA. Pro residues-rich tracts occupy residues 405–447, 456–504, and 510–530; these read PPMP…PPGM, RLLP…PPRP, and PLVPPLGPAPPGLFPPAPLPN. The short motif at 455 to 466 is the PGR element; sequence PRLLPPGPPPGR. Lysine 557 participates in a covalent cross-link: Glycyl lysine isopeptide (Lys-Gly) (interchain with G-Cter in SUMO2). Lysine 565 bears the N6-acetyllysine mark. A Glycyl lysine isopeptide (Lys-Gly) (interchain with G-Cter in SUMO2) cross-link involves residue lysine 572. The disordered stretch occupies residues 588 to 620; it reads ENKGATAVPQRRSEDDSAVPVAKAAPRSGPSVA. Residue serine 600 is modified to Phosphoserine. Residues 633 to 641 form a required for nuclear export region; it reads FMKEMEGLL.

As to quaternary structure, interacts via the PGR motif with PQBP1 in the nucleus. Interacts with the WW domains of WBP4. Interacts with PPP1CA, PPP1CB and PPP1CC. In terms of tissue distribution, ubiquitously expressed, with highest levels in testis.

The protein localises to the nucleus. It is found in the cytoplasm. Functionally, activates pre-mRNA splicing. May inhibit PP1 phosphatase activity. The polypeptide is WW domain-binding protein 11 (Wbp11) (Mus musculus (Mouse)).